A 218-amino-acid chain; its full sequence is Small ribosomal subunit protein uS3 (218 aa).

One can recognise a KH type-2 domain in the interval 38-106; that stretch reads IREFISKRLS…RVHINILEIK (69 aa).

This sequence belongs to the universal ribosomal protein uS3 family. Part of the 30S ribosomal subunit. Forms a tight complex with proteins S10 and S14.

Its function is as follows. Binds the lower part of the 30S subunit head. Binds mRNA in the 70S ribosome, positioning it for translation. This chain is Small ribosomal subunit protein uS3, found in Bacillus velezensis (strain DSM 23117 / BGSC 10A6 / LMG 26770 / FZB42) (Bacillus amyloliquefaciens subsp. plantarum).